The primary structure comprises 455 residues: Bifunctional protein GlmU (455 aa).

A pyrophosphorylase region spans residues 1–225; that stretch reads MNIVILAAGM…EWETLGVNSK (225 aa). UDP-N-acetyl-alpha-D-glucosamine is bound by residues 6–9, lysine 20, glutamine 71, 76–77, 98–100, glycine 135, glutamate 150, asparagine 165, and asparagine 223; these read LAAG, GT, and YGD. Mg(2+) is bound at residue aspartate 100. Mg(2+) is bound at residue asparagine 223. The segment at 226 to 246 is linker; sequence VQLAELERIHQRNLAQQLLED. Residues 247-455 are N-acetyltransferase; that stretch reads GVTLIDPARI…QRPVKQKKEG (209 aa). The UDP-N-acetyl-alpha-D-glucosamine site is built by arginine 329 and lysine 347. The active-site Proton acceptor is the histidine 359. Residues tyrosine 362 and asparagine 373 each coordinate UDP-N-acetyl-alpha-D-glucosamine. Residues alanine 376, 382–383, serine 401, alanine 419, and arginine 436 each bind acetyl-CoA; that span reads NY.

It in the N-terminal section; belongs to the N-acetylglucosamine-1-phosphate uridyltransferase family. In the C-terminal section; belongs to the transferase hexapeptide repeat family. In terms of assembly, homotrimer. Mg(2+) is required as a cofactor.

Its subcellular location is the cytoplasm. It catalyses the reaction alpha-D-glucosamine 1-phosphate + acetyl-CoA = N-acetyl-alpha-D-glucosamine 1-phosphate + CoA + H(+). The enzyme catalyses N-acetyl-alpha-D-glucosamine 1-phosphate + UTP + H(+) = UDP-N-acetyl-alpha-D-glucosamine + diphosphate. The protein operates within nucleotide-sugar biosynthesis; UDP-N-acetyl-alpha-D-glucosamine biosynthesis; N-acetyl-alpha-D-glucosamine 1-phosphate from alpha-D-glucosamine 6-phosphate (route II): step 2/2. It functions in the pathway nucleotide-sugar biosynthesis; UDP-N-acetyl-alpha-D-glucosamine biosynthesis; UDP-N-acetyl-alpha-D-glucosamine from N-acetyl-alpha-D-glucosamine 1-phosphate: step 1/1. Its pathway is bacterial outer membrane biogenesis; LPS lipid A biosynthesis. Catalyzes the last two sequential reactions in the de novo biosynthetic pathway for UDP-N-acetylglucosamine (UDP-GlcNAc). The C-terminal domain catalyzes the transfer of acetyl group from acetyl coenzyme A to glucosamine-1-phosphate (GlcN-1-P) to produce N-acetylglucosamine-1-phosphate (GlcNAc-1-P), which is converted into UDP-GlcNAc by the transfer of uridine 5-monophosphate (from uridine 5-triphosphate), a reaction catalyzed by the N-terminal domain. The polypeptide is Bifunctional protein GlmU (Ralstonia pickettii (strain 12J)).